The chain runs to 145 residues: MLSAEEKASVLSLFAKVNVEEVGGEALGRLLVVYPWTQRFFEHFGDLSSADAILGNPKVKAHGKKVLDTFSEGLKQLDDLKGAFASLSELHCDKLHVDPENFRLLGNVLVVVLARRFGGEFTPELQANFQKVVTGVANALAHRYH.

The region spanning 1-145 (MLSAEEKASV…VANALAHRYH (145 aa)) is the Globin domain. 2 residues coordinate heme b: H62 and H91.

This sequence belongs to the globin family. In terms of assembly, heterotetramer of two alpha chains and two beta chains. Red blood cells.

Its function is as follows. Involved in oxygen transport from the lung to the various peripheral tissues. The sequence is that of Hemoglobin fetal subunit beta from Capra hircus (Goat).